The sequence spans 1819 residues: U3 small nucleolar RNA-associated protein 10 (1819 aa).

Residues 583 to 620 (LDFQAILPFLLVALADPSERIRREAAAALAAIGGIYKK) form an HEAT 1 repeat. 2 consecutive transmembrane segments (helical) span residues 945 to 965 (IQSGMSYLLSLTLGSLLAIVN) and 1001 to 1021 (ALLLVSGLSVIAPELVLHSVM). HEAT repeat units lie at residues 1045 to 1082 (QTIDQVVPALIQSLRNQKRDVVSGTSELLLSFTAAFEH), 1269 to 1306 (LTLVDFLDTIEVLLQRPSDELRRKVLRLLEGRLRQNPE), 1313 to 1351 (IRVLDFLPTLVDIVRSSPDILLKHAAVACIDRIAEKYGK), and 1775 to 1812 (ALLPEMLPYISELMEDEDENVEREVRKWVKQIENVLGE).

This sequence belongs to the HEATR1/UTP10 family. Component of the ribosomal small subunit (SSU) processome.

The protein localises to the nucleus. The protein resides in the nucleolus. It localises to the membrane. Its function is as follows. Involved in nucleolar processing of pre-18S ribosomal RNA. Involved in ribosome biosynthesis. The chain is U3 small nucleolar RNA-associated protein 10 from Aspergillus clavatus (strain ATCC 1007 / CBS 513.65 / DSM 816 / NCTC 3887 / NRRL 1 / QM 1276 / 107).